A 774-amino-acid chain; its full sequence is C6 finger domain transcription factor nscR (774 aa).

The zn(2)-C6 fungal-type DNA-binding region spans 17–43 (CELCRERKIKCDKVDPCNNCVSAGVVC). 3 disordered regions span residues 61-94 (RPMS…SGAV), 536-559 (LQLP…PQEH), and 665-697 (PTFS…SDLS). The segment covering 67-78 (FVPPRAPTPVAG) has biased composition (pro residues). A compositionally biased stretch (low complexity) spans 536–548 (LQLPQPSNGSSQP). The span at 665–674 (PTFSLGSSTG) shows a compositional bias: polar residues. Residues 675-697 (TSAAPTPRSRASSTPSDTLSDLS) are compositionally biased toward low complexity.

The protein resides in the nucleus. Its function is as follows. Transcription factor that specifically regulates the neosartoricin biosynthesis gene cluster. In Aspergillus fumigatus (strain ATCC MYA-4609 / CBS 101355 / FGSC A1100 / Af293) (Neosartorya fumigata), this protein is C6 finger domain transcription factor nscR.